The following is a 180-amino-acid chain: Large ribosomal subunit protein uL5 (180 aa).

This sequence belongs to the universal ribosomal protein uL5 family. Part of the 50S ribosomal subunit; part of the 5S rRNA/L5/L18/L25 subcomplex. Contacts the 5S rRNA and the P site tRNA. Forms a bridge to the 30S subunit in the 70S ribosome.

In terms of biological role, this is one of the proteins that bind and probably mediate the attachment of the 5S RNA into the large ribosomal subunit, where it forms part of the central protuberance. In the 70S ribosome it contacts protein S13 of the 30S subunit (bridge B1b), connecting the 2 subunits; this bridge is implicated in subunit movement. Contacts the P site tRNA; the 5S rRNA and some of its associated proteins might help stabilize positioning of ribosome-bound tRNAs. The sequence is that of Large ribosomal subunit protein uL5 from Solibacter usitatus (strain Ellin6076).